An 89-amino-acid polypeptide reads, in one-letter code: Myrmicitoxin(1)-Pm2a (89 aa).

A signal peptide spans 1–22 (MEIPKLLYIAVIAIGLSGSLTC). The propeptide occupies 23–61 (ATPLANPWGDPEAEANPEAKATAEATAEAIAEALAEPEP). The residue at position 88 (Asn88) is an Asparagine amide.

It belongs to the formicidae venom clade 1 family. As to expression, expressed by the venom gland.

The protein resides in the secreted. Functionally, toxin that potently modulates mammalian voltage-gated sodium (Nav) channels, reducing the voltage threshold for activation and inhibiting channel inactivation. Shows activity on hNav1.6/SCN8A (EC(50)=176 nM), mNav1.7/SCN9A (EC(50)=102 nM) and hNav1.7 (EC(50)=154 nM). In vivo, causes spontaneous, gradual and long-lasting nocifensive behaviors by intraplantar injection in mice, as well as pronounced swelling of the injected paw. Does not have effect on insects (blowflies). This is Myrmicitoxin(1)-Pm2a from Pogonomyrmex maricopa (Maricopa harvester ant).